We begin with the raw amino-acid sequence, 275 residues long: Large ribosomal subunit protein uL2 (275 aa).

The interval 223–260 (VAMNPVDHPHGGGEGRTSGGRHPVSPWGLPTKGYKTRS) is disordered.

Belongs to the universal ribosomal protein uL2 family. As to quaternary structure, part of the 50S ribosomal subunit. Forms a bridge to the 30S subunit in the 70S ribosome.

One of the primary rRNA binding proteins. Required for association of the 30S and 50S subunits to form the 70S ribosome, for tRNA binding and peptide bond formation. It has been suggested to have peptidyltransferase activity; this is somewhat controversial. Makes several contacts with the 16S rRNA in the 70S ribosome. The protein is Large ribosomal subunit protein uL2 of Legionella pneumophila (strain Lens).